We begin with the raw amino-acid sequence, 263 residues long: S-acyl fatty acid synthase thioesterase, medium chain (263 aa).

At methionine 1 the chain carries N-acetylmethionine. Active-site residues include serine 101 and histidine 237. An important for interaction with FASN region spans residues 262–263 (LT).

Belongs to the thioesterase family. In terms of assembly, interacts (via C-terminus) with FASN.

It is found in the cytoplasm. The protein localises to the cytosol. It catalyses the reaction (9Z)-octadecenoyl-[ACP] + H2O = (9Z)-octadecenoate + holo-[ACP] + H(+). The catalysed reaction is decanoyl-CoA + H2O = decanoate + CoA + H(+). The enzyme catalyses dodecanoyl-CoA + H2O = dodecanoate + CoA + H(+). It carries out the reaction tetradecanoyl-CoA + H2O = tetradecanoate + CoA + H(+). It catalyses the reaction hexadecanoyl-CoA + H2O = hexadecanoate + CoA + H(+). Its function is as follows. Contributes to the release of free fatty acids from fatty acid synthase (FASN). Has broad substrate specificity, giving rise to a range of free fatty acids with chain lengths between 10 and 16 carbon atoms (C10 - C16). This chain is S-acyl fatty acid synthase thioesterase, medium chain, found in Rattus norvegicus (Rat).